The chain runs to 816 residues: Leucine--tRNA ligase (816 aa).

The 'HIGH' region motif lies at 40–51; sequence PYPSGSGLHVGH. A 'KMSKS' region motif is present at residues 576-580; sequence KMSKS. Residue K579 participates in ATP binding.

The protein belongs to the class-I aminoacyl-tRNA synthetase family.

The protein localises to the cytoplasm. It carries out the reaction tRNA(Leu) + L-leucine + ATP = L-leucyl-tRNA(Leu) + AMP + diphosphate. The sequence is that of Leucine--tRNA ligase from Chlorobium phaeobacteroides (strain DSM 266 / SMG 266 / 2430).